The following is a 57-amino-acid chain: DNA-directed RNA polymerase subunit Rpo6 (57 aa).

Belongs to the archaeal Rpo6/eukaryotic RPB6 RNA polymerase subunit family. As to quaternary structure, part of the RNA polymerase complex.

It localises to the cytoplasm. It carries out the reaction RNA(n) + a ribonucleoside 5'-triphosphate = RNA(n+1) + diphosphate. Functionally, DNA-dependent RNA polymerase (RNAP) catalyzes the transcription of DNA into RNA using the four ribonucleoside triphosphates as substrates. This chain is DNA-directed RNA polymerase subunit Rpo6, found in Methanocaldococcus jannaschii (strain ATCC 43067 / DSM 2661 / JAL-1 / JCM 10045 / NBRC 100440) (Methanococcus jannaschii).